The sequence spans 286 residues: Bifunctional protein FolD (286 aa).

NADP(+) contacts are provided by residues 165 to 167 (GRS), serine 190, and valine 231.

The protein belongs to the tetrahydrofolate dehydrogenase/cyclohydrolase family. Homodimer.

It catalyses the reaction (6R)-5,10-methylene-5,6,7,8-tetrahydrofolate + NADP(+) = (6R)-5,10-methenyltetrahydrofolate + NADPH. It carries out the reaction (6R)-5,10-methenyltetrahydrofolate + H2O = (6R)-10-formyltetrahydrofolate + H(+). The protein operates within one-carbon metabolism; tetrahydrofolate interconversion. Its function is as follows. Catalyzes the oxidation of 5,10-methylenetetrahydrofolate to 5,10-methenyltetrahydrofolate and then the hydrolysis of 5,10-methenyltetrahydrofolate to 10-formyltetrahydrofolate. The polypeptide is Bifunctional protein FolD (Bacillus thuringiensis (strain Al Hakam)).